A 60-amino-acid chain; its full sequence is Large ribosomal subunit protein bL33 (60 aa).

Belongs to the bacterial ribosomal protein bL33 family.

This chain is Large ribosomal subunit protein bL33, found in Christiangramia forsetii (strain DSM 17595 / CGMCC 1.15422 / KT0803) (Gramella forsetii).